Reading from the N-terminus, the 204-residue chain is Recombination protein RecR (204 aa).

The C4-type zinc-finger motif lies at 58–75; sequence CSICQNITDLGTDPCLLC. The Toprim domain maps to 83 to 181; it reads SVICVVESPT…NVTRIARGIP (99 aa).

This sequence belongs to the RecR family.

Functionally, may play a role in DNA repair. It seems to be involved in an RecBC-independent recombinational process of DNA repair. It may act with RecF and RecO. The sequence is that of Recombination protein RecR from Chlorobaculum parvum (strain DSM 263 / NCIMB 8327) (Chlorobium vibrioforme subsp. thiosulfatophilum).